The primary structure comprises 479 residues: Pyruvate kinase (479 aa).

Residue R36 coordinates substrate. K(+) contacts are provided by N38, S40, and D70. Residue 38-41 (NFSH) coordinates ATP. Residues R77 and K160 each contribute to the ATP site. Mg(2+) is bound at residue E225. Residues G251, D252, and T284 each contribute to the substrate site. D252 serves as a coordination point for Mg(2+).

This sequence belongs to the pyruvate kinase family. In terms of assembly, homotetramer. It depends on Mg(2+) as a cofactor. K(+) is required as a cofactor.

It carries out the reaction pyruvate + ATP = phosphoenolpyruvate + ADP + H(+). Its pathway is carbohydrate degradation; glycolysis; pyruvate from D-glyceraldehyde 3-phosphate: step 5/5. With respect to regulation, allosterically activated by AMP and by several sugar phosphates. Belongs to type II PK. The sequence is that of Pyruvate kinase (pykA) from Buchnera aphidicola subsp. Baizongia pistaciae (strain Bp).